A 656-amino-acid polypeptide reads, in one-letter code: Heparan-alpha-glucosaminide N-acetyltransferase (656 aa).

The interval 1–31 is disordered; that stretch reads MTGGSSSRRRRAEERSSAAGTERNSRREAVG. The Lumenal, vesicle segment spans residues 1 to 185; sequence MTGGSSSRRR…IIVNENPVDS (185 aa). 2 N-linked (GlcNAc...) asparagine glycosylation sites follow: Asn-137 and Asn-157. A disulfide bridge links Cys-146 with Cys-455. Residues 186-206 form a helical membrane-spanning segment; that stretch reads NLPVSIAFLVGLALIVAVSLL. Residues 207 to 268 are Cytoplasmic-facing; that stretch reads RLLLSLDDVN…NRLRCVDTFR (62 aa). The disordered stretch occupies residues 234–253; it reads SELGSPSRADPLSADYQPET. Residues Ser-238 and Ser-240 each carry the phosphoserine modification. A Phosphotyrosine modification is found at Tyr-249. The chain crosses the membrane as a helical span at residues 269–289; sequence GLALVLMVFVNYGGGKYWYFK. Residue His-290 is part of the active site. Residues 290 to 295 lie on the Lumenal, vesicle side of the membrane; the sequence is HSSWNG. A helical membrane pass occupies residues 296 to 316; the sequence is LTVADLVFPWFVFIMGTSIFL. Residues 317-338 lie on the Cytoplasmic side of the membrane; that stretch reads SMTSILQRGCSKLKLLGKIVWR. Residues 339–359 traverse the membrane as a helical segment; it reads SFLLICIGVIIVNPNYCLGPL. The Lumenal, vesicle segment spans residues 360 to 367; it reads SWDKVRIP. The helical transmembrane segment at 368–388 threads the bilayer; that stretch reads GVLQRLGVTYFVVAVLEFFFW. Residues 389-413 lie on the Cytoplasmic side of the membrane; the sequence is KPVPDSCTLESSCFSLRDITSSWPQ. The chain crosses the membrane as a helical span at residues 414–434; it reads WLTILTLESIWLALTFFLPVP. Over 435–493 the chain is Lumenal, vesicle; sequence GCPTGYLGPGGIGDLGKYPHCTGGAAGYIDRLLLGDNHLYQHPSSTVLYHTEVAYDPEG. The helical transmembrane segment at 494–514 threads the bilayer; the sequence is VLGTINSIVMAFLGVQAGKIL. At 515 to 522 the chain is on the cytoplasmic side; that stretch reads VYYKDQTK. A helical transmembrane segment spans residues 523-543; the sequence is AILTRFAAWCCILGLISIVLT. At 544–557 the chain is on the lumenal, vesicle side; it reads KVSANEGFIPINKN. A helical membrane pass occupies residues 558-578; it reads LWSISYVTTLSCFAFFILLIL. Residues 579–585 lie on the Cytoplasmic side of the membrane; that stretch reads YPVVDVK. Residues 586–606 form a helical membrane-spanning segment; that stretch reads GLWTGTPFFYPGMNSILVYVG. The Lumenal, vesicle portion of the chain corresponds to 607 to 627; sequence HEVLENYFPFQWKLADEQSHK. Residues 628 to 648 form a helical membrane-spanning segment; sequence EHLIQNIVATALWVLIAYVLY. Residues 641–656 form a lysosomal targeting region region; it reads VLIAYVLYKKKLFWKI. Residues 649 to 656 are Cytoplasmic-facing; it reads KKKLFWKI.

Homooligomer. Homooligomerization is necessary for enzyme activity. In terms of processing, undergoes intralysosomal proteolytic cleavage; occurs within the end of the first and/or the beginning of the second luminal domain and is essential for the activation of the enzyme. Post-translationally, glycosylated. As to expression, expressed in the retina.

Its subcellular location is the lysosome membrane. The catalysed reaction is alpha-D-glucosaminyl-[heparan sulfate](n) + acetyl-CoA = N-acetyl-alpha-D-glucosaminyl-[heparan sulfate](n) + CoA + H(+). Lysosomal acetyltransferase that acetylates the non-reducing terminal alpha-glucosamine residue of intralysosomal heparin or heparan sulfate, converting it into a substrate for luminal alpha-N-acetyl glucosaminidase. In Mus musculus (Mouse), this protein is Heparan-alpha-glucosaminide N-acetyltransferase (Hgsnat).